Here is a 361-residue protein sequence, read N- to C-terminus: Phospho-N-acetylmuramoyl-pentapeptide-transferase (361 aa).

A run of 10 helical transmembrane segments spans residues 27 to 47 (GAFF…INLL), 72 to 92 (TPTM…LLWA), 98 to 118 (YVWL…MDDF), 135 to 155 (LAMG…LHPE), 169 to 189 (TLIN…AGSA), 200 to 220 (GLAI…AYAV), 240 to 260 (IFVF…YNAP), 263 to 283 (AVFM…AIAV), 289 to 309 (IVLV…IIQV), and 338 to 358 (QIVI…LATL).

It belongs to the glycosyltransferase 4 family. MraY subfamily. The cofactor is Mg(2+).

The protein localises to the cell inner membrane. The catalysed reaction is UDP-N-acetyl-alpha-D-muramoyl-L-alanyl-gamma-D-glutamyl-meso-2,6-diaminopimeloyl-D-alanyl-D-alanine + di-trans,octa-cis-undecaprenyl phosphate = di-trans,octa-cis-undecaprenyl diphospho-N-acetyl-alpha-D-muramoyl-L-alanyl-D-glutamyl-meso-2,6-diaminopimeloyl-D-alanyl-D-alanine + UMP. It functions in the pathway cell wall biogenesis; peptidoglycan biosynthesis. Functionally, catalyzes the initial step of the lipid cycle reactions in the biosynthesis of the cell wall peptidoglycan: transfers peptidoglycan precursor phospho-MurNAc-pentapeptide from UDP-MurNAc-pentapeptide onto the lipid carrier undecaprenyl phosphate, yielding undecaprenyl-pyrophosphoryl-MurNAc-pentapeptide, known as lipid I. The sequence is that of Phospho-N-acetylmuramoyl-pentapeptide-transferase from Dinoroseobacter shibae (strain DSM 16493 / NCIMB 14021 / DFL 12).